The chain runs to 247 residues: Adenosylcobinamide-GDP ribazoletransferase (247 aa).

The next 5 helical transmembrane spans lie at 34–54 (IVMF…IFIL), 59–79 (CGIP…TGGF), 113–133 (GGLA…ELAL), 138–158 (MLAA…LLMY), and 194–214 (VLLL…AIFI).

Belongs to the CobS family. The cofactor is Mg(2+).

It localises to the cell inner membrane. It carries out the reaction alpha-ribazole + adenosylcob(III)inamide-GDP = adenosylcob(III)alamin + GMP + H(+). The catalysed reaction is alpha-ribazole 5'-phosphate + adenosylcob(III)inamide-GDP = adenosylcob(III)alamin 5'-phosphate + GMP + H(+). Its pathway is cofactor biosynthesis; adenosylcobalamin biosynthesis; adenosylcobalamin from cob(II)yrinate a,c-diamide: step 7/7. Functionally, joins adenosylcobinamide-GDP and alpha-ribazole to generate adenosylcobalamin (Ado-cobalamin). Also synthesizes adenosylcobalamin 5'-phosphate from adenosylcobinamide-GDP and alpha-ribazole 5'-phosphate. This chain is Adenosylcobinamide-GDP ribazoletransferase, found in Salmonella typhi.